The sequence spans 429 residues: MALRPVVLRRAPAHSRGILTRPGPPRPRGPLPRTPWTTRGPPPDQLARVVERRPVREQVELDTVTYAGRQYFVPGLARPRFPPWDRGWREPWHSPGPRYEDMPLRKERGCFICHQRVRMLEGVRQAQWLTKTKLVQGLPAKVLSIAENPAYQLQEQEEAVHRAVAHARLWETTEVSPRREKYCPVLFEDLIHLCRSMSVKYPSLARRMLARNYRIAATWERESTLLQIRGLNGILMNSMTPIPPVASKEEILATKDHVLETFYPISPTIDLQEVNVYQELNDTGFKDGYPYSHPHTLYFLESANKRPNRFRPEQLRAKMLMFAFGNALAKAKVLYGNDPQVLEQPIVVQSVGTDGQLFQFLVFQLNTTDLVSNDGIKNLVWIDSDQNLYESAQCVPEVKKRVVTKPTGIYGLQPETFKKFLALYLHGTV.

The N-terminal 29 residues, 1–29 (MALRPVVLRRAPAHSRGILTRPGPPRPRG), are a transit peptide targeting the mitochondrion. Positions 12–45 (PAHSRGILTRPGPPRPRGPLPRTPWTTRGPPPDQ) are disordered. Residues 22 to 33 (PGPPRPRGPLPR) are compositionally biased toward pro residues.

It belongs to the mitochondrion-specific ribosomal protein mL37 family. In terms of assembly, component of the mitochondrial ribosome large subunit (39S) which comprises a 16S rRNA and about 50 distinct proteins.

The protein resides in the mitochondrion. This chain is Large ribosomal subunit protein mL37 (MRPL37), found in Gallus gallus (Chicken).